A 316-amino-acid chain; its full sequence is Dof zinc finger protein DOF5.7 (316 aa).

The tract at residues 1–42 (MSSHTNLPSPKPVPKPDHRISGTSQTKKPPSSSVAQDQQNLK) is disordered. The span at 21 to 42 (SGTSQTKKPPSSSVAQDQQNLK) shows a compositional bias: polar residues. Residues 41 to 95 (LKCPRCNSPNTKFCYYNNYSLSQPRHFCKSCRRYWTRGGALRNVPIGGGCRKTKK) form a Dof-type zinc finger. Positions 43, 46, 68, and 71 each coordinate Zn(2+). Disordered stretches follow at residues 92-111 (KTKKSIKPNSSMNTLPSSSS) and 257-294 (NSSSPSSPTKKGDNQTEWYFGNNSDNEGVISNNANTGG). Low complexity predominate over residues 101–111 (SSMNTLPSSSS). Residues 257 to 291 (NSSSPSSPTKKGDNQTEWYFGNNSDNEGVISNNAN) are compositionally biased toward polar residues.

It is found in the nucleus. Functionally, transcription factor that binds specifically to a 5'-AA[AG]G-3' consensus core sequence. This is Dof zinc finger protein DOF5.7 (DOF5.7) from Arabidopsis thaliana (Mouse-ear cress).